Reading from the N-terminus, the 91-residue chain is MARSIKKGPYIAHHLLKKIDAINESGSKNTIKTWSRSSTITPEFVGHTLAVHNGNKFIPVFVTENMVGHKLGEFSPTRTFKGHTKKNKNKK.

This sequence belongs to the universal ribosomal protein uS19 family.

Its function is as follows. Protein S19 forms a complex with S13 that binds strongly to the 16S ribosomal RNA. This chain is Small ribosomal subunit protein uS19, found in Amoebophilus asiaticus (strain 5a2).